The primary structure comprises 251 residues: Hydroxyacylglutathione hydrolase (251 aa).

Zn(2+) is bound by residues His53, His55, Asp57, His58, His110, Asp127, and His165.

It belongs to the metallo-beta-lactamase superfamily. Glyoxalase II family. As to quaternary structure, monomer. It depends on Zn(2+) as a cofactor.

It carries out the reaction an S-(2-hydroxyacyl)glutathione + H2O = a 2-hydroxy carboxylate + glutathione + H(+). The protein operates within secondary metabolite metabolism; methylglyoxal degradation; (R)-lactate from methylglyoxal: step 2/2. Its function is as follows. Thiolesterase that catalyzes the hydrolysis of S-D-lactoyl-glutathione to form glutathione and D-lactic acid. This chain is Hydroxyacylglutathione hydrolase, found in Escherichia coli (strain 55989 / EAEC).